The primary structure comprises 992 residues: Leucine-rich repeat receptor-like serine/threonine-protein kinase BAM3 (992 aa).

Positions 1–21 (MADKIFTFFLILSSISPLLCS) are cleaved as a signal peptide. Residues 22–656 (SLISPLNLSL…ARSRGEISAK (635 aa)) lie on the Extracellular side of the membrane. N-linked (GlcNAc...) asparagine glycosylation occurs at Asn28. Cys64 and Cys71 form a disulfide bridge. N-linked (GlcNAc...) asparagine glycans are attached at residues Asn75 and Asn87. LRR repeat units follow at residues 75–99 (NQSI…ISRL), 100–124 (SPSL…IYEL), 126–148 (GLEV…GFSQ), 150–173 (TQLV…LTTL), 174–199 (TRLE…SFLS), and 201–221 (KFLS…LANI). Residues Asn131 and Asn163 are each glycosylated (N-linked (GlcNAc...) asparagine). An N-linked (GlcNAc...) asparagine glycan is attached at Asn220. A CLE45 peptide binding motif is present at residues 226-231 (QLYLGY). 15 LRR repeats span residues 246–270 (LINL…LGNL), 271–294 (KNLE…LGNM), 296–320 (SLKT…GLQK), 322–342 (QLFN…VSEL), 343–366 (PDLQ…LGSN), 368–391 (NLIE…CFGR), 393–414 (LKIL…LGQC), 415–438 (EPLW…LIYL), 439–462 (PNLS…EAGN), 465–489 (FSSL…IRNL), 491–513 (SLQI…IGSL), 514–536 (KSLL…EFGD), 537–561 (CMSL…ISQI), 563–585 (ILNY…LGYM), and 586–610 (KSLT…QFSY). Asn256 and Asn293 each carry an N-linked (GlcNAc...) asparagine glycan. Asn354 is a glycosylation site (N-linked (GlcNAc...) asparagine). Asn440 and Asn472 each carry an N-linked (GlcNAc...) asparagine glycan. N-linked (GlcNAc...) asparagine glycosylation is present at Asn525. N-linked (GlcNAc...) asparagine glycosylation is found at Asn568, Asn575, Asn597, Asn613, Asn631, and Asn635. The chain crosses the membrane as a helical span at residues 657 to 677 (FKLFFGLGLLGFFLVFVVLAV). At 678–992 (VKNRRMRKNN…ISQAKQPNTF (315 aa)) the chain is on the cytoplasmic side. A Protein kinase domain is found at 710–992 (VKENHVIGKG…ISQAKQPNTF (283 aa)). ATP contacts are provided by residues 716 to 724 (IGKGGRGIV) and Lys738. Catalysis depends on Asp836, which acts as the Proton acceptor.

It belongs to the protein kinase superfamily. Ser/Thr protein kinase family. In terms of assembly, interacts with CLE45, especially in roots. Binds to the dimer CLV2/CRN. Expressed in seedlings, roots, leaves, stems, inflorescences, flowers and siliques. In roots, confined to protophloem and sieve element precursor cells.

It localises to the cell membrane. The protein localises to the endoplasmic reticulum membrane. It carries out the reaction L-seryl-[protein] + ATP = O-phospho-L-seryl-[protein] + ADP + H(+). The enzyme catalyses L-threonyl-[protein] + ATP = O-phospho-L-threonyl-[protein] + ADP + H(+). Its function is as follows. Necessary for male gametophyte development, as well as ovule specification and function. Required for the development of high-ordered vascular strands within the leaf and a correlated control of leaf shape, size and symmetry. LRR-rich receptor-like kinase (LRR-RLK) involved in the perception of CLE45 peptide ligand which mediates root growth inhibition by repressing protophloem differentiation; this mechanism requires CRN. BRX, BAM3, and CLE45 act together to regulate the transition of protophloem cells from proliferation to differentiation, thus impinging on postembryonic growth capacity of the root meristem. Necessary for CLE45 peptide-triggered accumulation of MAKR5 in developing sieve elements. This is Leucine-rich repeat receptor-like serine/threonine-protein kinase BAM3 from Arabidopsis thaliana (Mouse-ear cress).